Consider the following 156-residue polypeptide: Probable succinate transporter subunit YjjB (156 aa).

Helical transmembrane passes span W7 to F27, F54 to I74, V86 to I106, and F128 to W148.

Belongs to the ThrE exporter (TC 2.A.79) family. In terms of assembly, the transporter is composed of YjjB and YjjP.

Its subcellular location is the cell inner membrane. Involved in succinate export with YjjP. Both proteins are required for export. The chain is Probable succinate transporter subunit YjjB from Yersinia enterocolitica serotype O:8 / biotype 1B (strain NCTC 13174 / 8081).